Reading from the N-terminus, the 319-residue chain is Transmembrane protein 121 (319 aa).

7 helical membrane-spanning segments follow: residues 10-30, 43-63, 74-94, 112-132, 150-170, 174-194, and 214-234; these read HVCL…AYLV, IIVL…AVWV, YAMI…YFIF, ALTL…VALD, LFWV…LWEP, GLPL…LLVL, and MMLY…LARA. Pro residues predominate over residues 277-306; it reads PALSLELQPPPPQRNSVPPPPPPLHGPPGR. The tract at residues 277-319 is disordered; sequence PALSLELQPPPPQRNSVPPPPPPLHGPPGRPHMSSPTRDPLDT.

Belongs to the TMEM121 family. Highly expressed in heart and detected in pancreas, liver and skeletal muscle.

Its subcellular location is the membrane. In terms of biological role, may play a role in MAPK signaling. This Homo sapiens (Human) protein is Transmembrane protein 121 (TMEM121).